The primary structure comprises 447 residues: Alkylglycerol monooxygenase (447 aa).

Helical transmembrane passes span 43–63 (ATPF…ILKG) and 111–131 (WDST…YYWF). The region spanning 119-249 (FTFLGVDFGY…LIIWDRIFGT (131 aa)) is the Fatty acid hydroxylase domain. The Histidine box-1 motif lies at 132–136 (HRMAH). Positions 145 to 149 (HQAHH) match the Histidine box-2 motif. Residues 170–190 (SWVFYCPLALFIPPSVFAVHI) traverse the membrane as a helical segment. The Histidine box-3 signature appears at 221 to 225 (HRVHH). A run of 3 helical transmembrane segments spans residues 340–360 (VLQF…TAVL), 363–383 (VTLL…GFLL), and 413–433 (IPSL…FWGV).

This sequence belongs to the sterol desaturase family. TMEM195 subfamily. Fe cation serves as cofactor. Highly expressed in lever and small intestine.

The protein localises to the endoplasmic reticulum membrane. It carries out the reaction 1-O-(1,2-saturated-alkyl)-sn-glycerol + (6R)-L-erythro-5,6,7,8-tetrahydrobiopterin + O2 = a 1-(1-hydroxyalkyl)-sn-glycerol + (6R)-L-erythro-6,7-dihydrobiopterin + H2O. In terms of biological role, glyceryl-ether monooxygenase that cleaves the O-alkyl bond of ether lipids. Ether lipids are essential components of brain membranes. In Mus musculus (Mouse), this protein is Alkylglycerol monooxygenase (Agmo).